We begin with the raw amino-acid sequence, 431 residues long: Selenocysteine lyase (431 aa).

The residue at position 239 (lysine 239) is an N6-(pyridoxal phosphate)lysine. The active-site S-selanylcysteine intermediate is the cysteine 367.

It belongs to the class-V pyridoxal-phosphate-dependent aminotransferase family. As to quaternary structure, homodimer. It depends on pyridoxal 5'-phosphate as a cofactor.

It is found in the cytoplasm. The protein resides in the cytosol. It catalyses the reaction L-selenocysteine + AH2 = hydrogenselenide + L-alanine + A + H(+). Its function is as follows. Catalyzes the decomposition of L-selenocysteine to L-alanine and elemental selenium. The sequence is that of Selenocysteine lyase (scly) from Xenopus tropicalis (Western clawed frog).